Consider the following 310-residue polypeptide: MRLVFAGTPEPALPSLQRLIDSARHDVIAVLTRPDAAAGRRGRPSPSPVAELAAAHGIPVLKPPRPNSEEFVAELAALAPDCCAVVAYGALLREELLAVPALGWVNLHFSVLPAWRGAAPVQAALAAGDEVTGATTFQIELSLDSGPVYGVVTETIRPTDTAGDLLGRLAESGAGLLEATMDGIEDGTLTAVPQPAEGVSIAPKVSVDDARIRWELPAHVVDRRIRSVTPNPGAWTMAGELRIKVGPVTVPDDGPKDLEPGEIRVGKKHVHVGTATDAVLLGTVQPPGKKSMNAADWARGARAEDIRRAR.

(6S)-5,6,7,8-tetrahydrofolate is bound at residue 110-113 (SVLP). The tract at residues 283-310 (TVQPPGKKSMNAADWARGARAEDIRRAR) is disordered. Residues 299-310 (RGARAEDIRRAR) show a composition bias toward basic and acidic residues.

This sequence belongs to the Fmt family.

It catalyses the reaction L-methionyl-tRNA(fMet) + (6R)-10-formyltetrahydrofolate = N-formyl-L-methionyl-tRNA(fMet) + (6S)-5,6,7,8-tetrahydrofolate + H(+). Functionally, attaches a formyl group to the free amino group of methionyl-tRNA(fMet). The formyl group appears to play a dual role in the initiator identity of N-formylmethionyl-tRNA by promoting its recognition by IF2 and preventing the misappropriation of this tRNA by the elongation apparatus. This chain is Methionyl-tRNA formyltransferase, found in Mycolicibacterium gilvum (strain PYR-GCK) (Mycobacterium gilvum (strain PYR-GCK)).